The sequence spans 185 residues: Large ribosomal subunit protein uL5 (185 aa).

This sequence belongs to the universal ribosomal protein uL5 family. In terms of assembly, part of the 50S ribosomal subunit; part of the 5S rRNA/L5/L18/L25 subcomplex. Contacts the 5S rRNA and the P site tRNA. Forms a bridge to the 30S subunit in the 70S ribosome.

In terms of biological role, this is one of the proteins that bind and probably mediate the attachment of the 5S RNA into the large ribosomal subunit, where it forms part of the central protuberance. In the 70S ribosome it contacts protein S13 of the 30S subunit (bridge B1b), connecting the 2 subunits; this bridge is implicated in subunit movement. Contacts the P site tRNA; the 5S rRNA and some of its associated proteins might help stabilize positioning of ribosome-bound tRNAs. In Streptomyces coelicolor (strain ATCC BAA-471 / A3(2) / M145), this protein is Large ribosomal subunit protein uL5.